We begin with the raw amino-acid sequence, 368 residues long: Phospho-N-acetylmuramoyl-pentapeptide-transferase (368 aa).

The next 10 helical transmembrane spans lie at 32–52 (TGGA…WIID), 79–99 (TPTM…VLWA), 102–122 (LNPY…IGFY), 142–160 (LLLE…TRLG), 176–196 (VALD…VGAG), 207–227 (GLAI…AYLA), 244–264 (AGEL…FLWF), 271–291 (IFMG…IAVA), 296–316 (IVLA…IVQV), and 345–365 (QIVI…LSTL).

Belongs to the glycosyltransferase 4 family. MraY subfamily. The cofactor is Mg(2+).

It is found in the cell inner membrane. It catalyses the reaction UDP-N-acetyl-alpha-D-muramoyl-L-alanyl-gamma-D-glutamyl-meso-2,6-diaminopimeloyl-D-alanyl-D-alanine + di-trans,octa-cis-undecaprenyl phosphate = di-trans,octa-cis-undecaprenyl diphospho-N-acetyl-alpha-D-muramoyl-L-alanyl-D-glutamyl-meso-2,6-diaminopimeloyl-D-alanyl-D-alanine + UMP. It functions in the pathway cell wall biogenesis; peptidoglycan biosynthesis. In terms of biological role, catalyzes the initial step of the lipid cycle reactions in the biosynthesis of the cell wall peptidoglycan: transfers peptidoglycan precursor phospho-MurNAc-pentapeptide from UDP-MurNAc-pentapeptide onto the lipid carrier undecaprenyl phosphate, yielding undecaprenyl-pyrophosphoryl-MurNAc-pentapeptide, known as lipid I. The chain is Phospho-N-acetylmuramoyl-pentapeptide-transferase from Nitrobacter winogradskyi (strain ATCC 25391 / DSM 10237 / CIP 104748 / NCIMB 11846 / Nb-255).